Here is a 378-residue protein sequence, read N- to C-terminus: Spermidine/putrescine import ATP-binding protein PotA (378 aa).

The 231-residue stretch at 18–248 folds into the ABC transporter domain; sequence VLLSGISKSF…PKNLFVAGFI (231 aa). ATP is bound at residue 50-57; sequence GPSGCGKT.

This sequence belongs to the ABC transporter superfamily. Spermidine/putrescine importer (TC 3.A.1.11.1) family. The complex is composed of two ATP-binding proteins (PotA), two transmembrane proteins (PotB and PotC) and a solute-binding protein (PotD).

The protein resides in the cell inner membrane. It carries out the reaction ATP + H2O + polyamine-[polyamine-binding protein]Side 1 = ADP + phosphate + polyamineSide 2 + [polyamine-binding protein]Side 1.. Part of the ABC transporter complex PotABCD involved in spermidine/putrescine import. Responsible for energy coupling to the transport system. This chain is Spermidine/putrescine import ATP-binding protein PotA, found in Salmonella choleraesuis (strain SC-B67).